Here is a 484-residue protein sequence, read N- to C-terminus: Neuronal acetylcholine receptor subunit alpha-9 (484 aa).

The N-terminal stretch at 1-27 (MKRNNLSSFYVSLWLLFTATMLQAVES) is a signal peptide. Topologically, residues 28-240 (AKGKYAQMLF…FTLILKRKSS (213 aa)) are extracellular. The N-linked (GlcNAc...) asparagine glycan is linked to N59. Cysteines 157 and 171 form a disulfide. N-linked (GlcNAc...) asparagine glycosylation is present at N172. Na(+) is bound by residues S193 and D195. C221 and C222 are joined by a disulfide. 3 helical membrane-spanning segments follow: residues 241–261 (FYIF…PLGF), 271–291 (VSLG…VAEI), and 305–325 (YIAT…IMNV). The Cytoplasmic segment spans residues 326-462 (HHCGSEAKPV…WKKVAKVMDR (137 aa)). Residues 364–395 (RREKEQEHRLEGGDMCRGGDGKSHLSSRNDDS) form a disordered region. A helical membrane pass occupies residues 463–483 (FFMWIFFIMVFFMSVLIIGKA).

It belongs to the ligand-gated ion channel (TC 1.A.9) family. Acetylcholine receptor (TC 1.A.9.1) subfamily. Alpha-9/CHRNA9 sub-subfamily. As to quaternary structure, forms homo- or heteropentameric channels in conjunction with CHRNA10. The native outer hair cell receptor is composed of CHRNA9:CHRNA10 heterooligomers. Found in the stoichiometric form (CHRNA9)2:(CHRNA10)3. As to expression, expressed in hair cells of the cochlea (at protein level). Expressed in hair cells of the cochlea.

It localises to the synaptic cell membrane. Its subcellular location is the cell membrane. It catalyses the reaction Ca(2+)(in) = Ca(2+)(out). It carries out the reaction K(+)(in) = K(+)(out). The catalysed reaction is Na(+)(in) = Na(+)(out). The enzyme catalyses Mg(2+)(in) = Mg(2+)(out). Activated by a myriad of ligands such as acetylcholine. AChR activity is inhibited by the antagonist alpha-conotoxins RgIA and GeXXA, small disulfide-constrained peptides from cone snails. Functionally, component of neuronal acetylcholine receptors (nAChRs) that function as pentameric, ligand-gated cation channels with high calcium permeability among other activities. nAChRs are excitatory neurotrasnmitter receptors formed by a collection of nAChR subunits known to mediate synaptic transmission in the nervous system and the neuromuscular junction. Each nAchR subunit confers differential attributes to channel properties, including activation, deactivation and desensitization kinetics, pH sensitivity, cation permeability, and binding to allosteric modulators. Forms either homopentamers or heteropentamers with CHRNA10. Expressed in the inner ear, in sympathetic neurons and in other non-neuronal cells, such as skin keratinocytes and lymphocytes. The channel is permeable to a range of divalent cations including calcium, the influx of which may activate a potassium current which hyperpolarizes the cell membrane. This Gallus gallus (Chicken) protein is Neuronal acetylcholine receptor subunit alpha-9 (CHRNA9).